Here is a 284-residue protein sequence, read N- to C-terminus: tRNA-cytidine(32) 2-sulfurtransferase (284 aa).

A compositionally biased stretch (polar residues) spans 1-11 (MTFHQPVSETA). The interval 1 to 20 (MTFHQPVSETAQPDEASGHP) is disordered. The short motif at 63 to 68 (SGGKDS) is the PP-loop motif element. The [4Fe-4S] cluster site is built by cysteine 138, cysteine 141, and cysteine 229.

This sequence belongs to the TtcA family. Homodimer. The cofactor is Mg(2+). [4Fe-4S] cluster is required as a cofactor.

The protein localises to the cytoplasm. It catalyses the reaction cytidine(32) in tRNA + S-sulfanyl-L-cysteinyl-[cysteine desulfurase] + AH2 + ATP = 2-thiocytidine(32) in tRNA + L-cysteinyl-[cysteine desulfurase] + A + AMP + diphosphate + H(+). Its pathway is tRNA modification. In terms of biological role, catalyzes the ATP-dependent 2-thiolation of cytidine in position 32 of tRNA, to form 2-thiocytidine (s(2)C32). The sulfur atoms are provided by the cysteine/cysteine desulfurase (IscS) system. This Chelativorans sp. (strain BNC1) protein is tRNA-cytidine(32) 2-sulfurtransferase.